The following is a 386-amino-acid chain: 2-isopropylmalate synthase (386 aa).

One can recognise a Pyruvate carboxyltransferase domain in the interval 12–265 (VRIFDTTLRD…DVGVRTYLLY (254 aa)). Asp21, His203, His205, and Asn239 together coordinate a divalent metal cation.

Belongs to the alpha-IPM synthase/homocitrate synthase family. In terms of assembly, homodimer. It depends on a divalent metal cation as a cofactor.

It catalyses the reaction 3-methyl-2-oxobutanoate + acetyl-CoA + H2O = (2S)-2-isopropylmalate + CoA + H(+). It functions in the pathway amino-acid biosynthesis; L-leucine biosynthesis; L-leucine from 3-methyl-2-oxobutanoate: step 1/4. Is not inhibited by leucine. Catalyzes the condensation of the acetyl group of acetyl-CoA with 3-methyl-2-oxobutanoate (2-oxoisovalerate) to form 3-carboxy-3-hydroxy-4-methylpentanoate (2-isopropylmalate). Carries out the first step of the leucine biosynthesis pathway. Also displays a low citramalate synthase activity, using pyruvate as substrate, but is unable to use 2-oxoglutarate. In Sulfolobus acidocaldarius (strain ATCC 33909 / DSM 639 / JCM 8929 / NBRC 15157 / NCIMB 11770), this protein is 2-isopropylmalate synthase.